The chain runs to 109 residues: MFGKGGMGNLMKQAQQMQERMQKMQEQLAEMEVVGEAGAGMVKVTMAGSHSVRRIEIDQSLMEDDKEMIEDLVAAAVNDAVRRVEEQSKSKMGELTGGMQLPPGMKLPF.

2 disordered regions span residues 1–23 and 87–109; these read MFGK…RMQK and QSKS…KLPF. The segment covering 11-23 has biased composition (low complexity); the sequence is MKQAQQMQERMQK.

The protein belongs to the YbaB/EbfC family. Homodimer.

Its subcellular location is the cytoplasm. It localises to the nucleoid. Its function is as follows. Binds to DNA and alters its conformation. May be involved in regulation of gene expression, nucleoid organization and DNA protection. The polypeptide is Nucleoid-associated protein ASA_2087 (Aeromonas salmonicida (strain A449)).